A 536-amino-acid chain; its full sequence is Bicoumarin synthase desC (536 aa).

Residues 12–32 (YVALAGITGFFLVFLGFLVVI) form a helical membrane-spanning segment. N-linked (GlcNAc...) asparagine glycosylation is found at asparagine 149 and asparagine 371. Residue cysteine 480 coordinates heme.

This sequence belongs to the cytochrome P450 family. Requires heme as cofactor.

The protein localises to the membrane. The catalysed reaction is 2 7-demethylsiderin + NADPH + O2 = desertorin A + NADP(+) + 2 H2O. The protein operates within secondary metabolite biosynthesis. Functionally, non-reducing polyketide synthase; part of the gene cluster that mediates the biosynthesis of the bicoumarin desertorin. The non-reducing polyketide synthase desS first catalyzes the formation of the pentaketidic 4,7-dihydroxy-5-methylcoumarin from acetyl coenzyme A and 4 malonyl coenzyme A molecules. Further O-methylation by desB leads to the formation of 7-demethylsiderin. Then, an oxidative phenol coupling catalyzed by the cytochrome P450 monooxygenase desC forms the 6,8'-dimer M-desertorin A via dimerization the monomeric precursor, 7-demethylsiderin. M-desertorin A is further converted to M-desertorin C. This Aspergillus desertorum (Emericella desertorum) protein is Bicoumarin synthase desC.